The sequence spans 1390 residues: Bromodomain adjacent to zinc finger domain protein 2 (1390 aa).

Disordered stretches follow at residues 30–67 (AKIQKATASSPSKSTNGTSASTSAVPSTSGTSSSQNEA), 178–215 (AKKKPAGVASTSSASTSSSTPSTSSASITSSNNNAANN), and 235–269 (QKQQQQQKDTQKKADQAKKAKELAKQQQKEQDVKN). The span at 35 to 45 (ATASSPSKSTN) shows a compositional bias: polar residues. Composition is skewed to low complexity over residues 46-63 (GTSASTSAVPSTSGTSSS) and 186-215 (ASTSSASTSSSTPSTSSASITSSNNNAANN). Residues 243–269 (DTQKKADQAKKAKELAKQQQKEQDVKN) are compositionally biased toward basic and acidic residues. In terms of domain architecture, MBD spans 323–395 (KTNEAMLRLP…DNFLFNTKLV (73 aa)). The DDT domain occupies 524–588 (SQGFADALMV…LRLALEFPGM (65 aa)). Residues 705–724 (KEEQNHESDSEPPTRPDTPK) are compositionally biased toward basic and acidic residues. Residues 705–729 (KEEQNHESDSEPPTRPDTPKKATVA) are disordered. The PHD-type zinc finger occupies 1100-1149 (EALCQICKSMDGDEMLVCDGCESGCHMECFRPRMTKVPEGDWFCQRCREE). Residues 1218–1241 (EERELEDDNHAENGENTKNGHMNG) are disordered. One can recognise a Bromo domain in the interval 1273 to 1377 (LPKNMNKELC…KFFQKRWKQL (105 aa)).

This sequence belongs to the WAL family. In terms of assembly, interacts with set-6. As to expression, broadly expressed in the nervous system, including head, body and tail neurons.

The protein localises to the nucleus. The protein resides in the chromosome. Functionally, chromatin reader protein, involved in positively modulating the rate of age-related behavioral deterioration. Positively modulates the level of global trimethylated 'Lys-9' of histone H3 (H3K9me3), but not of H3K9me2 or H3K9me1. May repress the expression of mitochondrial function-related genes by occupying their promoter regions, working in concert with histone methyltransferase, set-6. Involved in modulation of the mitochondrial unfolded protein response (UPR). Negatively regulates expression of bas-1, a serotonin (5-HT) and dopamine synthesizing enzyme (DOPA decarboxylase), with aging. Negatively modulates levels of endogenous 5-HT and dopamine with aging. Involved in modulating longevity, probably as a result of enhanced stress resistance via mechanisms related to dietary restriction and mitochondrial function. This is Bromodomain adjacent to zinc finger domain protein 2 from Caenorhabditis elegans.